A 196-amino-acid polypeptide reads, in one-letter code: Protein LSM12 homolog A (196 aa).

The Sm domain occupies 3–73 (APGPGEYFSV…VSEVDIINDR (71 aa)). The 95-residue stretch at 81–175 (ASLNISKLAN…IVEKHFRDVE (95 aa)) folds into the AD domain. The disordered stretch occupies residues 174–196 (VESQKTMQRSQAQQTQKDSSLSS). Residues 177-196 (QKTMQRSQAQQTQKDSSLSS) show a composition bias toward polar residues.

The protein belongs to the LSM12 family.

This Danio rerio (Zebrafish) protein is Protein LSM12 homolog A (lsm12a).